A 190-amino-acid polypeptide reads, in one-letter code: NADH-quinone oxidoreductase subunit B (190 aa).

[4Fe-4S] cluster is bound by residues Cys-67, Cys-68, Cys-132, and Cys-162.

It belongs to the complex I 20 kDa subunit family. As to quaternary structure, NDH-1 is composed of 14 different subunits. Subunits NuoB, C, D, E, F, and G constitute the peripheral sector of the complex. Requires [4Fe-4S] cluster as cofactor.

The protein resides in the cell inner membrane. The catalysed reaction is a quinone + NADH + 5 H(+)(in) = a quinol + NAD(+) + 4 H(+)(out). Functionally, NDH-1 shuttles electrons from NADH, via FMN and iron-sulfur (Fe-S) centers, to quinones in the respiratory chain. The immediate electron acceptor for the enzyme in this species is believed to be ubiquinone. Couples the redox reaction to proton translocation (for every two electrons transferred, four hydrogen ions are translocated across the cytoplasmic membrane), and thus conserves the redox energy in a proton gradient. The sequence is that of NADH-quinone oxidoreductase subunit B from Anaplasma marginale (strain Florida).